The following is a 799-amino-acid chain: Leucine--tRNA ligase (799 aa).

The 'HIGH' region signature appears at 39–50; the sequence is PYPSGAGLHMGH. Residues 575–579 carry the 'KMSKS' region motif; it reads KMSKS. Lysine 578 serves as a coordination point for ATP.

It belongs to the class-I aminoacyl-tRNA synthetase family.

The protein resides in the cytoplasm. It carries out the reaction tRNA(Leu) + L-leucine + ATP = L-leucyl-tRNA(Leu) + AMP + diphosphate. This Malacoplasma penetrans (strain HF-2) (Mycoplasma penetrans) protein is Leucine--tRNA ligase.